The following is a 102-amino-acid chain: MANKKIRIRLKAYEHRTLDTAAGKIVETATRTGATVAGPVPLPTERSLYTIIRATHKYKDSREQFEMRTHKRLIDIINPTQKTVDALMKLDLPSGVNVEIKL.

It belongs to the universal ribosomal protein uS10 family. In terms of assembly, part of the 30S ribosomal subunit.

Its function is as follows. Involved in the binding of tRNA to the ribosomes. The protein is Small ribosomal subunit protein uS10 of Streptococcus thermophilus (strain ATCC BAA-491 / LMD-9).